Here is a 267-residue protein sequence, read N- to C-terminus: Putative ABC transporter permease protein MJ0413 (267 aa).

7 helical membrane-spanning segments follow: residues 18–38 (VLKI…AIYI), 48–68 (EAVI…GSLI), 78–98 (VISG…LMGY), 115–135 (PIPP…GEMS), 136–156 (MIFI…ISGV), 188–208 (PSIL…VVAA), and 228–248 (LSRM…GLVL). The ABC transmembrane type-1 domain maps to 71 to 252 (TIISIKRVIS…LIGLVLDRGL (182 aa)).

It belongs to the binding-protein-dependent transport system permease family. CysTW subfamily.

Its subcellular location is the cell membrane. Functionally, probably part of a binding-protein-dependent transport system. Probably responsible for the translocation of the substrate across the membrane. The chain is Putative ABC transporter permease protein MJ0413 from Methanocaldococcus jannaschii (strain ATCC 43067 / DSM 2661 / JAL-1 / JCM 10045 / NBRC 100440) (Methanococcus jannaschii).